The chain runs to 56 residues: Ovomucoid (56 aa).

A Kazal-like domain is found at 6 to 56; it reads VDCSEYPKPACTLEHRPLCGSDNKTYGNKCNFCNAVVESNGTLTLSHFGKC. Intrachain disulfides connect C8/C38, C16/C35, and C24/C56. N-linked (GlcNAc...) asparagine glycosylation occurs at N45.

The protein resides in the secreted. This Pavo cristatus (Indian peafowl) protein is Ovomucoid.